Here is a 402-residue protein sequence, read N- to C-terminus: CCA-adding enzyme (402 aa).

ATP is bound by residues G32 and R35. CTP-binding residues include G32 and R35. 2 residues coordinate Mg(2+): D45 and D47. Residues R119, D162, R165, R168, and R171 each coordinate ATP. CTP contacts are provided by R119, D162, R165, R168, and R171.

Belongs to the tRNA nucleotidyltransferase/poly(A) polymerase family. Bacterial CCA-adding enzyme type 3 subfamily. In terms of assembly, homodimer. Requires Mg(2+) as cofactor.

The enzyme catalyses a tRNA precursor + 2 CTP + ATP = a tRNA with a 3' CCA end + 3 diphosphate. It carries out the reaction a tRNA with a 3' CCA end + 2 CTP + ATP = a tRNA with a 3' CCACCA end + 3 diphosphate. Its function is as follows. Catalyzes the addition and repair of the essential 3'-terminal CCA sequence in tRNAs without using a nucleic acid template. Adds these three nucleotides in the order of C, C, and A to the tRNA nucleotide-73, using CTP and ATP as substrates and producing inorganic pyrophosphate. tRNA 3'-terminal CCA addition is required both for tRNA processing and repair. Also involved in tRNA surveillance by mediating tandem CCA addition to generate a CCACCA at the 3' terminus of unstable tRNAs. While stable tRNAs receive only 3'-terminal CCA, unstable tRNAs are marked with CCACCA and rapidly degraded. In Lactococcus lactis subsp. cremoris (strain SK11), this protein is CCA-adding enzyme.